The sequence spans 90 residues: UPF0729 protein Bm1_03610 (90 aa).

Belongs to the UPF0729 family.

The protein is UPF0729 protein Bm1_03610 of Brugia malayi (Filarial nematode worm).